Here is a 475-residue protein sequence, read N- to C-terminus: Protein arginine N-methyltransferase 2 (475 aa).

A disordered region spans residues 167–194 (EFLSDDDDEEMDVDDDEEDESRDGEETG). A compositionally biased stretch (acidic residues) spans 169–194 (LSDDDDEEMDVDDDEEDESRDGEETG). The 229-residue stretch at 247-475 (LAGSQMDYLK…EDFYLPVCTF (229 aa)) folds into the RMT2 domain. Residues Tyr254, Met285, 310–315 (FGLGII), 331–333 (EAH), 358–359 (WQ), and Asp378 each bind S-adenosyl-L-methionine.

The protein belongs to the class I-like SAM-binding methyltransferase superfamily. RMT2 methyltransferase family. Monomer.

It localises to the cytoplasm. Its subcellular location is the nucleus. S-adenosyl-L-methionine-dependent protein-arginine N-methyltransferase that methylates the delta-nitrogen atom of arginine residues to form N5-methylarginine (type IV) in target proteins. Monomethylates ribosomal protein L12. In Yarrowia lipolytica (strain CLIB 122 / E 150) (Yeast), this protein is Protein arginine N-methyltransferase 2.